The sequence spans 213 residues: Adenylate kinase (213 aa).

Residue 10-15 (GAGKGT) coordinates ATP. Positions 30 to 59 (AVGDIFRTIIKTSTSEAELINNYVKQGALI) are NMP. AMP is bound by residues Arg36, 57 to 59 (ALI), 85 to 88 (GYPR), and Gln92. Residues 123–161 (GRYSCKNCGKIYNIHFLQPKIEHVCDVCSSSVFDYRKDD) are LID. Arg124 contacts ATP. Positions 127 and 130 each coordinate Zn(2+). Position 133 to 134 (133 to 134 (IY)) interacts with ATP. 2 residues coordinate Zn(2+): Cys147 and Cys150. AMP is bound by residues Arg158 and Arg169. An ATP-binding site is contributed by Lys197.

The protein belongs to the adenylate kinase family. As to quaternary structure, monomer.

The protein localises to the cytoplasm. The catalysed reaction is AMP + ATP = 2 ADP. The protein operates within purine metabolism; AMP biosynthesis via salvage pathway; AMP from ADP: step 1/1. Catalyzes the reversible transfer of the terminal phosphate group between ATP and AMP. Plays an important role in cellular energy homeostasis and in adenine nucleotide metabolism. The chain is Adenylate kinase from Rickettsia prowazekii (strain Madrid E).